The primary structure comprises 1070 residues: DNA-directed RNA polymerase subunit beta (1070 aa).

The protein belongs to the RNA polymerase beta chain family. In plastids the minimal PEP RNA polymerase catalytic core is composed of four subunits: alpha, beta, beta', and beta''. When a (nuclear-encoded) sigma factor is associated with the core the holoenzyme is formed, which can initiate transcription.

The protein resides in the plastid. The protein localises to the chloroplast. It catalyses the reaction RNA(n) + a ribonucleoside 5'-triphosphate = RNA(n+1) + diphosphate. Its function is as follows. DNA-dependent RNA polymerase catalyzes the transcription of DNA into RNA using the four ribonucleoside triphosphates as substrates. The protein is DNA-directed RNA polymerase subunit beta of Dioscorea elephantipes (Elephant's foot yam).